We begin with the raw amino-acid sequence, 86 residues long: Parvalbumin beta 3 (86 aa).

Ala-1 is subject to N-acetylalanine. One can recognise an EF-hand domain in the interval 35–70 (LSPEEVKKFFAIIDQDHSGFIEEEELKLFLQTFSAG). The Ca(2+) site is built by Asp-48, Asp-50, Ser-52, Phe-54, Glu-56, and Glu-59.

Belongs to the parvalbumin family.

Functionally, in muscle, parvalbumin is thought to be involved in relaxation after contraction. It binds two calcium ions. This is Parvalbumin beta 3 from Merluccius hubbsi (Argentine hake).